Reading from the N-terminus, the 244-residue chain is 1-(5-phosphoribosyl)-5-[(5-phosphoribosylamino)methylideneamino] imidazole-4-carboxamide isomerase (244 aa).

Asp-11 serves as the catalytic Proton acceptor. Catalysis depends on Asp-132, which acts as the Proton donor.

It belongs to the HisA/HisF family.

The protein localises to the cytoplasm. The catalysed reaction is 1-(5-phospho-beta-D-ribosyl)-5-[(5-phospho-beta-D-ribosylamino)methylideneamino]imidazole-4-carboxamide = 5-[(5-phospho-1-deoxy-D-ribulos-1-ylimino)methylamino]-1-(5-phospho-beta-D-ribosyl)imidazole-4-carboxamide. It participates in amino-acid biosynthesis; L-histidine biosynthesis; L-histidine from 5-phospho-alpha-D-ribose 1-diphosphate: step 4/9. The protein is 1-(5-phosphoribosyl)-5-[(5-phosphoribosylamino)methylideneamino] imidazole-4-carboxamide isomerase of Sphingopyxis alaskensis (strain DSM 13593 / LMG 18877 / RB2256) (Sphingomonas alaskensis).